The following is a 942-amino-acid chain: Protein O-mannosyl-transferase TMTC1 (942 aa).

Residues 1-20 (MLVTRGDRGGGERAPSRRPR) lie on the Cytoplasmic side of the membrane. A helical membrane pass occupies residues 21-41 (CGLVPAGAAALLAGASCLCYG). Topologically, residues 42 to 109 (RSLRGEFVHD…RLNIFLTGMN (68 aa)) are extracellular. Residues 110-130 (PFYFHAVNVILHCLVTLVLMY) traverse the membrane as a helical segment. Residues 131-140 (TCDKTVFKNR) lie on the Cytoplasmic side of the membrane. A helical transmembrane segment spans residues 141 to 157 (GLAFVTALLFAVHPVHT). The Extracellular segment spans residues 158–159 (EA). A helical transmembrane segment spans residues 160 to 180 (VAGIVGRADVLACLLFLLAFL). Over 181-196 (SYQRSLDQGCAGQCFP) the chain is Cytoplasmic. The helical transmembrane segment at 197-217 (TTASPFFLLLSLFLGTCAMLV) threads the bilayer. Topologically, residues 218-331 (KETGITVFGV…LLTLRPFLKR (114 aa)) are extracellular. Residues 245–285 (NGAVCQHSSGQPGSPQPSSQQAHPHRESRKQRFPHKDSWGG) are disordered. Low complexity predominate over residues 250-266 (QHSSGQPGSPQPSSQQA). The helical transmembrane segment at 332–352 (AILVISYVTVILYFRLWIMGG) threads the bilayer. Residues 353 to 373 (TMPLFSEQDNPASFSPYILTR) lie on the Cytoplasmic side of the membrane. The helical transmembrane segment at 374–394 (FLTYSYLLAFNVWLLLAPITL) threads the bilayer. Topologically, residues 395–414 (CYDWQVGSIPLVETIWDVRN) are extracellular. A helical transmembrane segment spans residues 415–435 (LATILLAVVMALLSLHCVAAF). Topologically, residues 436-441 (KRLEHK) are cytoplasmic. The chain crosses the membrane as a helical span at residues 442 to 462 (EVLAGLLFLVFPFIPASNLFF). Arg-463 is a topological domain (extracellular). The chain crosses the membrane as a helical span at residues 464–484 (VGFVVAERVLYMPSMGYCILF). At 485-498 (VHGLSKLCAGLSRC) the chain is on the cytoplasmic side. A helical membrane pass occupies residues 499-519 (GATSLMASTVLLLLLFSWKTV). The Extracellular segment spans residues 520–942 (KQNEIWLSRE…LQEVRERDQT (423 aa)). TPR repeat units lie at residues 543–576 (AKVH…YPRH), 577–607 (ASAL…HPQH), 608–641 (NRAL…GPDF), 642–675 (ADAY…CPDS), 676–709 (SDLH…SPSH), 710–742 (HVAV…VART), 743–776 (AEVL…QPSQ), 777–810 (RELR…EPRC), 811–844 (LECY…KPKD), 849–882 (SELF…DPDQ), and 883–916 (AQAW…VPDS).

Belongs to the TMTC family. As to quaternary structure, may interact with FAM168B.

It localises to the membrane. It is found in the endoplasmic reticulum. The enzyme catalyses a di-trans,poly-cis-dolichyl beta-D-mannosyl phosphate + L-seryl-[protein] = 3-O-(alpha-D-mannosyl)-L-seryl-[protein] + a di-trans,poly-cis-dolichyl phosphate + H(+). The catalysed reaction is a di-trans,poly-cis-dolichyl beta-D-mannosyl phosphate + L-threonyl-[protein] = 3-O-(alpha-D-mannosyl)-L-threonyl-[protein] + a di-trans,poly-cis-dolichyl phosphate + H(+). It participates in protein modification; protein glycosylation. Transfers mannosyl residues to the hydroxyl group of serine or threonine residues. The 4 members of the TMTC family are O-mannosyl-transferases dedicated primarily to the cadherin superfamily, each member seems to have a distinct role in decorating the cadherin domains with O-linked mannose glycans at specific regions. Also acts as O-mannosyl-transferase on other proteins such as PDIA3. In Mus musculus (Mouse), this protein is Protein O-mannosyl-transferase TMTC1.